An 82-amino-acid chain; its full sequence is RNA-binding protein Hfq (82 aa).

Residues 11-71 (DTFLNHVRKT…ISTIMPGAPI (61 aa)) enclose the Sm domain.

This sequence belongs to the Hfq family. As to quaternary structure, homohexamer.

In terms of biological role, RNA chaperone that binds small regulatory RNA (sRNAs) and mRNAs to facilitate mRNA translational regulation in response to envelope stress, environmental stress and changes in metabolite concentrations. Also binds with high specificity to tRNAs. This is RNA-binding protein Hfq from Rhodopseudomonas palustris (strain BisA53).